The sequence spans 309 residues: uncharacterized protein (309 aa).

A helical transmembrane segment spans residues 23–43 (ALVLSSIVNILLLLLIYSTVF).

It belongs to the chlamydial CPn_0593/CT_474/TC_0759 family.

Its subcellular location is the membrane. This is an uncharacterized protein from Chlamydia trachomatis serovar D (strain ATCC VR-885 / DSM 19411 / UW-3/Cx).